Reading from the N-terminus, the 337-residue chain is Holliday junction branch migration complex subunit RuvB (337 aa).

The segment at 1–180 (MTRLISADKS…FGVISRLEFY (180 aa)) is large ATPase domain (RuvB-L). Residues Leu-19, Arg-20, Gly-61, Lys-64, Thr-65, Thr-66, 127–129 (EDF), Arg-170, Tyr-180, and Arg-217 contribute to the ATP site. Residue Thr-65 participates in Mg(2+) binding. Residues 181-251 (THEELAFIIT…VADQALALLE (71 aa)) form a small ATPAse domain (RuvB-S) region. The head domain (RuvB-H) stretch occupies residues 254 to 337 (DMGFDMMDRA…APEPPQGKLF (84 aa)). Residues Arg-309 and Arg-314 each contribute to the DNA site.

The protein belongs to the RuvB family. Homohexamer. Forms an RuvA(8)-RuvB(12)-Holliday junction (HJ) complex. HJ DNA is sandwiched between 2 RuvA tetramers; dsDNA enters through RuvA and exits via RuvB. An RuvB hexamer assembles on each DNA strand where it exits the tetramer. Each RuvB hexamer is contacted by two RuvA subunits (via domain III) on 2 adjacent RuvB subunits; this complex drives branch migration. In the full resolvosome a probable DNA-RuvA(4)-RuvB(12)-RuvC(2) complex forms which resolves the HJ.

It localises to the cytoplasm. The catalysed reaction is ATP + H2O = ADP + phosphate + H(+). In terms of biological role, the RuvA-RuvB-RuvC complex processes Holliday junction (HJ) DNA during genetic recombination and DNA repair, while the RuvA-RuvB complex plays an important role in the rescue of blocked DNA replication forks via replication fork reversal (RFR). RuvA specifically binds to HJ cruciform DNA, conferring on it an open structure. The RuvB hexamer acts as an ATP-dependent pump, pulling dsDNA into and through the RuvAB complex. RuvB forms 2 homohexamers on either side of HJ DNA bound by 1 or 2 RuvA tetramers; 4 subunits per hexamer contact DNA at a time. Coordinated motions by a converter formed by DNA-disengaged RuvB subunits stimulates ATP hydrolysis and nucleotide exchange. Immobilization of the converter enables RuvB to convert the ATP-contained energy into a lever motion, pulling 2 nucleotides of DNA out of the RuvA tetramer per ATP hydrolyzed, thus driving DNA branch migration. The RuvB motors rotate together with the DNA substrate, which together with the progressing nucleotide cycle form the mechanistic basis for DNA recombination by continuous HJ branch migration. Branch migration allows RuvC to scan DNA until it finds its consensus sequence, where it cleaves and resolves cruciform DNA. The chain is Holliday junction branch migration complex subunit RuvB from Citrifermentans bemidjiense (strain ATCC BAA-1014 / DSM 16622 / JCM 12645 / Bem) (Geobacter bemidjiensis).